A 68-amino-acid polypeptide reads, in one-letter code: Small integral membrane protein 10-like protein 1 (68 aa).

Residues 1–21 (MAPAAAPSSLAVRASSPAATP) form a disordered region.

The chain is Small integral membrane protein 10-like protein 1 from Homo sapiens (Human).